The sequence spans 233 residues: DnaA regulatory inactivator Hda (233 aa).

Belongs to the DnaA family. HdA subfamily. As to quaternary structure, the active form seems to be an ADP-bound monomer. Forms the RIDA complex (regulatory inactivation of DnaA) of ATP-DnaA, ADP-Hda and the DNA-loaded beta sliding clamp (dnaN).

Mediates the interaction of DNA replication initiator protein DnaA with DNA polymerase subunit beta sliding clamp (dnaN). Stimulates hydrolysis of ATP-DnaA to ADP-DnaA, rendering DnaA inactive for reinitiation, a process called regulatory inhibition of DnaA or RIDA. This is DnaA regulatory inactivator Hda from Photorhabdus laumondii subsp. laumondii (strain DSM 15139 / CIP 105565 / TT01) (Photorhabdus luminescens subsp. laumondii).